Reading from the N-terminus, the 305-residue chain is Dermonecrotic toxin LrSicTox-alphaIA1ii (305 aa).

A signal peptide spans 1–18; that stretch reads MLLYVTLILGCWSAFSES. Positions 19–26 are excised as a propeptide; the sequence is AETDVAER. Residue H37 is part of the active site. Positions 57 and 59 each coordinate Mg(2+). H73 serves as the catalytic Nucleophile. Disulfide bonds link C77-C83 and C79-C222. Position 117 (D117) interacts with Mg(2+). The N-linked (GlcNAc...) asparagine glycan is linked to N282.

The protein belongs to the arthropod phospholipase D family. Class II subfamily. Class IIa sub-subfamily. Mg(2+) serves as cofactor. In terms of tissue distribution, expressed by the venom gland.

It is found in the secreted. The catalysed reaction is an N-(acyl)-sphingosylphosphocholine = an N-(acyl)-sphingosyl-1,3-cyclic phosphate + choline. It carries out the reaction an N-(acyl)-sphingosylphosphoethanolamine = an N-(acyl)-sphingosyl-1,3-cyclic phosphate + ethanolamine. The enzyme catalyses a 1-acyl-sn-glycero-3-phosphocholine = a 1-acyl-sn-glycero-2,3-cyclic phosphate + choline. It catalyses the reaction a 1-acyl-sn-glycero-3-phosphoethanolamine = a 1-acyl-sn-glycero-2,3-cyclic phosphate + ethanolamine. Inhibited with low affinity by edelfosine. Functionally, dermonecrotic toxins cleave the phosphodiester linkage between the phosphate and headgroup of certain phospholipids (sphingolipid and lysolipid substrates), forming an alcohol (often choline) and a cyclic phosphate. This toxin acts on sphingomyelin (SM). It also acts on a broad range of lysophospholipids, like lysophosphatidylinositol (LPI), lysophosphatidylglycerol (LPG), lysophosphatidylethanolamine (LPE), lysobisphosphatidic acid (LBPA), lysophosphatidylserine (LPS) and lysophosphatidylcholines (LPC) of varying chain lengths. The substrate preference is LPI &gt; LPG &gt; LPS &gt; LPC &gt;&gt; LPE, LBPA. Furthermore, the enzyme also act on cyclic phosphatidic acid and lyso-platelet activating factor (LPAF, an alkyl-LPC). The enzyme does not act on sphingosylphosphorylcholine (SPC, also known as lyso-sphingomyelin) and PAF. The toxin may also act on ceramide phosphoethanolamine (CPE). It acts by transphosphatidylation, releasing exclusively cyclic phosphate products as second products. It does not exhibit detectable PLA1/2 activity. It induces dose-dependent hemolysis and dermonecrosis. Also induces increased vascular permeability, edema, inflammatory response, and platelet aggregation. This chain is Dermonecrotic toxin LrSicTox-alphaIA1ii, found in Loxosceles reclusa (Brown recluse spider).